A 621-amino-acid polypeptide reads, in one-letter code: Phosphomethylpyrimidine synthase (621 aa).

Residues 1–23 (MTAPFLSSLSPTSPLASATAPFP) show a composition bias toward low complexity. The tract at residues 1–29 (MTAPFLSSLSPTSPLASATAPFPGSRKVY) is disordered. Substrate-binding positions include Asn215, Met244, Tyr273, His309, 329 to 331 (SRG), 370 to 373 (DGLR), and Glu409. Position 413 (His413) interacts with Zn(2+). Tyr436 contributes to the substrate binding site. His477 serves as a coordination point for Zn(2+). Residues Cys557, Cys560, and Cys565 each contribute to the [4Fe-4S] cluster site.

The protein belongs to the ThiC family. In terms of assembly, homodimer. The cofactor is [4Fe-4S] cluster.

The enzyme catalyses 5-amino-1-(5-phospho-beta-D-ribosyl)imidazole + S-adenosyl-L-methionine = 4-amino-2-methyl-5-(phosphooxymethyl)pyrimidine + CO + 5'-deoxyadenosine + formate + L-methionine + 3 H(+). The protein operates within cofactor biosynthesis; thiamine diphosphate biosynthesis. In terms of biological role, catalyzes the synthesis of the hydroxymethylpyrimidine phosphate (HMP-P) moiety of thiamine from aminoimidazole ribotide (AIR) in a radical S-adenosyl-L-methionine (SAM)-dependent reaction. The sequence is that of Phosphomethylpyrimidine synthase from Rhodospirillum rubrum (strain ATCC 11170 / ATH 1.1.1 / DSM 467 / LMG 4362 / NCIMB 8255 / S1).